The chain runs to 377 residues: Peroxisomal membrane protein PEX14 (377 aa).

The segment covering 1–15 (MASSEQAEQPSQPSS) has biased composition (low complexity). The segment at 1 to 24 (MASSEQAEQPSQPSSTPGSENVLP) is disordered. Position 2 is an N-acetylalanine (A2). At 2-108 (ASSEQAEQPS…YSPAGSRWRD (107 aa)) the chain is on the peroxisomal matrix side. K34 bears the N6-acetyllysine mark. Residues 109 to 126 (YGALAIIMAGIAFGFHQL) traverse the membrane as a helical segment. Residues 127–377 (YKKYLLPLIL…EGASNESERD (251 aa)) lie on the Cytoplasmic side of the membrane. Residues 230-377 (PPSPSAPKIP…EGASNESERD (148 aa)) are disordered. S232 is modified (phosphoserine). 2 stretches are compositionally biased toward low complexity: residues 244–259 (PVKSPSPSSPAAVNHH) and 265–275 (SPVSNESTSSS). Phosphoserine is present on residues S282 and S335. The segment covering 323 to 342 (KEDEEDEEDDDVSHVDEEDC) has biased composition (acidic residues). Residues 360–377 (QVEKLRRPEGASNESERD) are compositionally biased toward basic and acidic residues.

It belongs to the peroxin-14 family. In terms of assembly, interacts with PEX13; forming the PEX13-PEX14 docking complex. Interacts with PEX5 (via WxxxF/Y motifs). Interacts with PEX19. Interacts with tubulin.

The protein resides in the peroxisome membrane. In terms of biological role, component of the PEX13-PEX14 docking complex, a translocon channel that specifically mediates the import of peroxisomal cargo proteins bound to PEX5 receptor. The PEX13-PEX14 docking complex forms a large import pore which can be opened to a diameter of about 9 nm. Mechanistically, PEX5 receptor along with cargo proteins associates with the PEX14 subunit of the PEX13-PEX14 docking complex in the cytosol, leading to the insertion of the receptor into the organelle membrane with the concomitant translocation of the cargo into the peroxisome matrix. Plays a key role for peroxisome movement through a direct interaction with tubulin. In Homo sapiens (Human), this protein is Peroxisomal membrane protein PEX14.